Reading from the N-terminus, the 85-residue chain is HssA/B-like protein 59 (85 aa).

Belongs to the hssA/B family.

This is HssA/B-like protein 59 (hssl59) from Dictyostelium discoideum (Social amoeba).